A 183-amino-acid polypeptide reads, in one-letter code: Helofensin-1 (183 aa).

Residues 1-26 form the signal peptide; it reads MQMDWLFIAVVSAIGLLSSGVPGTQG. One copy of the C(6)C(4)C(9)C(6)CC 1; approximate repeat lies at 27 to 64; that stretch reads AYTTEQCRALNGTCRFYACFPKNVVIGKCDWLGWGCCA. One copy of the C(6)C(4)C(9)C(6)CC 2; approximate repeat lies at 65 to 101; that stretch reads RTPLERCTAKKGTCTASGCTETDTDHGPCDGGAQCCQ. The C(6)C(4)C(9)C(6)CC 3; approximate repeat unit spans residues 102-139; sequence RDPVKYCKFHGNVCGRGKCPMDHIPIGEQCMPGYPCCK. The C(6)C(4)C(9)C(6)CC 4; approximate repeat unit spans residues 140–177; that stretch reads RDGPAYCKSKGGKCLRRCSQIVPTDIIGVCADGVPCCK.

The protein belongs to the beta-defensin family. Helofensin subfamily. In terms of tissue distribution, expressed by the mandibular venom gland.

It is found in the secreted. Its function is as follows. Lethal toxin which possesses an inhibitory effect on direct electrical stimulation of the isolated hemi-diaphragm of mice. Neither hemorrhagic nor hemolytic activities are detected. Phospholipase A2 activity, proteolytic activity and arginine esterolytic activity are absent. The chain is Helofensin-1 from Heloderma suspectum cinctum (Banded Gila monster).